A 520-amino-acid chain; its full sequence is Probable cytochrome P450 6v1 (520 aa).

Residue Cys-465 participates in heme binding.

It belongs to the cytochrome P450 family. Heme is required as a cofactor.

The protein localises to the endoplasmic reticulum membrane. It localises to the microsome membrane. Its function is as follows. May be involved in the metabolism of insect hormones and in the breakdown of synthetic insecticides. The protein is Probable cytochrome P450 6v1 (Cyp6v1) of Drosophila melanogaster (Fruit fly).